Here is a 105-residue protein sequence, read N- to C-terminus: TPR repeat-containing protein PA0015 (105 aa).

TPR repeat units follow at residues 17 to 50 and 52 to 84; these read ALLR…DPKY and AGWK…AATH.

This chain is TPR repeat-containing protein PA0015, found in Pseudomonas aeruginosa (strain ATCC 15692 / DSM 22644 / CIP 104116 / JCM 14847 / LMG 12228 / 1C / PRS 101 / PAO1).